The sequence spans 337 residues: HTH-type transcriptional repressor PurR (337 aa).

The HTH lacI-type domain maps to 2-56 (ATIKDVAKLAAVSTTTVSHVINKTRFVAEATQKRVWEAVEELNYAPSAVARSLKC). Positions 4-23 (IKDVAKLAAVSTTTVSHVIN) form a DNA-binding region, H-T-H motif. The DNA-binding element occupies 48–56 (SAVARSLKC). Hypoxanthine is bound by residues F73, K189, T191, F220, and D276.

In terms of assembly, homodimer.

It participates in purine metabolism; purine nucleotide biosynthesis [regulation]. Functionally, is the main repressor of the genes involved in the de novo synthesis of purine nucleotides, regulating purB, purC, purEK, purF, purHD, purL, purMN and guaBA expression. PurR is allosterically activated to bind its cognate DNA by binding the purine corepressors, hypoxanthine or guanine, thereby effecting transcription repression. The polypeptide is HTH-type transcriptional repressor PurR (Aliivibrio fischeri (strain ATCC 700601 / ES114) (Vibrio fischeri)).